A 345-amino-acid polypeptide reads, in one-letter code: Matrix protein (345 aa).

Positions 148–185 are disordered; it reads KKKSKAKSAEGPSASTEDIKDSDTKGNQDIGDNGDLNS. A compositionally biased stretch (basic and acidic residues) spans 164 to 173; it reads EDIKDSDTKG.

It is found in the virion. The protein is Matrix protein (M2) of Aphis (Hairy beggarticks).